A 320-amino-acid polypeptide reads, in one-letter code: Delta(7)-sterol 5(6)-desaturase erg3C (320 aa).

3 helical membrane passes run 43 to 63 (VISI…FFSA), 91 to 111 (SSLS…LAEV), and 127 to 147 (PWLV…IYWI). A Fatty acid hydroxylase domain is found at 134-283 (ILYMAFNDIG…FTWADAYFGS (150 aa)). Residues 148–152 (HRLEH) carry the Histidine box-1 motif. Residues 161–165 (HKPHH) carry the Histidine box-2 motif. The chain crosses the membrane as a helical span at residues 224–244 (YMVLFAAVQIWTILIHDGDMI). Residues 259 to 263 (HTLHH) carry the Histidine box-3 motif.

The protein belongs to the sterol desaturase family. Fe cation is required as a cofactor.

Its subcellular location is the endoplasmic reticulum membrane. In terms of biological role, delta(7)-sterol 5(6)-desaturase; part of the third module of ergosterol biosynthesis pathway that includes the late steps of the pathway. Erg3C is a minor delta(7)-sterol 5(6)-desaturase within the ergosterol pathway, erg3B being the major one. The third module or late pathway involves the ergosterol synthesis itself through consecutive reactions that mainly occur in the endoplasmic reticulum (ER) membrane. Firstly, the squalene synthase erg9 catalyzes the condensation of 2 farnesyl pyrophosphate moieties to form squalene, which is the precursor of all steroids. Squalene synthase is crucial for balancing the incorporation of farnesyl diphosphate (FPP) into sterol and nonsterol isoprene synthesis. Secondly, squalene is converted into lanosterol by the consecutive action of the squalene epoxidase erg1 and the lanosterol synthase erg7. Then, the delta(24)-sterol C-methyltransferase erg6 methylates lanosterol at C-24 to produce eburicol. Eburicol is the substrate of the sterol 14-alpha demethylase encoded by cyp51A and cyp51B, to yield 4,4,24-trimethyl ergosta-8,14,24(28)-trienol. The C-14 reductase erg24 then reduces the C14=C15 double bond which leads to 4,4-dimethylfecosterol. A sequence of further demethylations at C-4, involving the C-4 demethylation complex containing the C-4 methylsterol oxidases erg25A or erg25B, the sterol-4-alpha-carboxylate 3-dehydrogenase erg26 and the 3-keto-steroid reductase erg27, leads to the production of fecosterol via 4-methylfecosterol. The C-8 sterol isomerase erg2 then catalyzes the reaction which results in unsaturation at C-7 in the B ring of sterols and thus converts fecosterol to episterol. The sterol-C5-desaturase erg3B then catalyzes the introduction of a C-5 double bond in the B ring to produce 5-dehydroepisterol. The 2 other sterol-C5-desaturases, erg3A and erg3C, seem to be less important in ergosterol biosynthesis. The C-22 sterol desaturase erg5 further converts 5-dehydroepisterol into ergosta-5,7,22,24(28)-tetraen-3beta-ol by forming the C-22(23) double bond in the sterol side chain. Finally, ergosta-5,7,22,24(28)-tetraen-3beta-ol is substrate of the C-24(28) sterol reductases erg4A and erg4B to produce ergosterol. Possible alternative sterol biosynthetic pathways might exist from fecosterol to ergosterol, depending on the activities of the erg3 isoforms. This is Delta(7)-sterol 5(6)-desaturase erg3C from Aspergillus fumigatus (strain ATCC MYA-4609 / CBS 101355 / FGSC A1100 / Af293) (Neosartorya fumigata).